A 296-amino-acid chain; its full sequence is SHSP domain-containing protein CPUR_05420 (296 aa).

Residues 50–83 (AWQTCPQQRHPHQPDVSGPPGSGFGEQPSQDTPN) are disordered. Residues 169–296 (ETKKSFTPDI…GKGVKEITIV (128 aa)) enclose the sHSP domain.

The protein belongs to the small heat shock protein (HSP20) family.

Functionally, monooxygenase; part of the ergochrome gene cluster responsible for the typical purple-black color of the ergot sclerotia. The ergochrome gene cluster produces several ergot pigments including the yellow ergochrome secalonic acid and its derivatives, as well as the red anthraquinones endocrocin and clavorubin. The pathway begins with the synthesis of atrochrysone thioester by the polyketide synthase (PKS) CPUR_05437. The atrochrysone carboxyl ACP thioesterase CPUR_05436 then breaks the thioester bond and releases the atrochrysone carboxylic acid from CPUR_05437. The atrochrysone carboxylic acid is then converted to atrochrysone which is further transformed into emodin anthrone. The next step is performed by the anthrone oxygenase CPUR_05434 that catalyzes the oxidation of emodinanthrone to emodin. Emodin is further modified to yield monodictyphenone via several steps involving CPUR_05427, CPUR_05428, CPUR_05429 and CPUR_05430. The short chain dehydrogenase/reductase CPUR_05418 then catalyzes the C-5 ketoreduction to give the xanthone skeleton of the monomeric units. Ergochromes formation requires further dimerization steps of different xanthone units, probably catalyzed by the cytochrome P450 monooxygenase CPUR_05419. CPUR_05425, CPUR_05426 and CPUR_05431 are unique to Claviceps, thus it is likely that they are involved in further modification of xanthone units or in their dimerization. The yellow ergochromes and the red anthraquinone pigments endocrocin and clavorubin are products from the same PKS derived precursors and the latter are likely shunt products in the pathway of xanthone biosynthesis. It is proposed that atrochrysone carboxylic acid released from the PKS CPUR_05437 can also be converted to endocrocin anthrone which is further oxidized into endocrocin by CPUR_05435. Endocrocin could be then modified to clavorubin, possibly by CPUR_05423 and CPUR_05431. Clavorubin is the principal anthraquinone metabolite produced by the cluster with a much higher yield compared to endocrocin. In Claviceps purpurea (strain 20.1) (Ergot fungus), this protein is SHSP domain-containing protein CPUR_05420.